The primary structure comprises 189 residues: dTTP/UTP pyrophosphatase (189 aa).

Catalysis depends on Asp70, which acts as the Proton acceptor. Residues Cys74 and Cys79 are joined by a disulfide bond.

This sequence belongs to the Maf family. YhdE subfamily. As to quaternary structure, homodimer. Requires a divalent metal cation as cofactor.

It localises to the cytoplasm. The enzyme catalyses dTTP + H2O = dTMP + diphosphate + H(+). It catalyses the reaction UTP + H2O = UMP + diphosphate + H(+). The catalysed reaction is CTP + H2O = CMP + diphosphate + H(+). It carries out the reaction psi-UTP + H2O = psi-UMP + diphosphate + H(+). The enzyme catalyses 5-methyl-CTP + H2O = 5-methyl-CMP + diphosphate + H(+). It catalyses the reaction 5-methyl-UTP + H2O = 5-methyl-UMP + diphosphate + H(+). Its function is as follows. Nucleoside triphosphate pyrophosphatase that hydrolyzes dTTP and UTP. Can also hydrolyze CTP and the modified nucleotides pseudo-UTP, 5-methyl-CTP (m(5)CTP) and 5-methyl-UTP (m(5)UTP). May have a dual role in cell division arrest and in preventing the incorporation of modified nucleotides into cellular nucleic acids. The sequence is that of dTTP/UTP pyrophosphatase from Bacillus subtilis (strain 168).